Reading from the N-terminus, the 289-residue chain is Inorganic pyrophosphatase (289 aa).

S2 is subject to N-acetylserine. K57 bears the N6-acetyllysine mark. Mg(2+) is bound by residues D116, D121, and D153. K228 is modified (N6-acetyllysine). S250 bears the Phosphoserine mark.

It belongs to the PPase family. As to quaternary structure, homodimer. Requires Mg(2+) as cofactor.

The protein localises to the cytoplasm. It carries out the reaction diphosphate + H2O = 2 phosphate + H(+). In Pongo abelii (Sumatran orangutan), this protein is Inorganic pyrophosphatase (PPA1).